The following is a 496-amino-acid chain: Histidine--tRNA ligase (496 aa).

This sequence belongs to the class-II aminoacyl-tRNA synthetase family. Homodimer.

The protein resides in the cytoplasm. The catalysed reaction is tRNA(His) + L-histidine + ATP = L-histidyl-tRNA(His) + AMP + diphosphate + H(+). The sequence is that of Histidine--tRNA ligase from Bartonella bacilliformis (strain ATCC 35685 / KC583 / Herrer 020/F12,63).